Reading from the N-terminus, the 347-residue chain is Phenylalanine--tRNA ligase alpha subunit (347 aa).

Glu265 contributes to the Mg(2+) binding site.

Belongs to the class-II aminoacyl-tRNA synthetase family. Phe-tRNA synthetase alpha subunit type 1 subfamily. Tetramer of two alpha and two beta subunits. Mg(2+) serves as cofactor.

It localises to the cytoplasm. The catalysed reaction is tRNA(Phe) + L-phenylalanine + ATP = L-phenylalanyl-tRNA(Phe) + AMP + diphosphate + H(+). This chain is Phenylalanine--tRNA ligase alpha subunit, found in Wolbachia sp. subsp. Drosophila simulans (strain wRi).